The chain runs to 207 residues: Outer-membrane lipoprotein LolB (207 aa).

A signal peptide spans 1–21 (MPLPDFRLIRLLPLASLVLTA). A lipid anchor (N-palmitoyl cysteine) is attached at Cys-22. A lipid anchor (S-diacylglycerol cysteine) is attached at Cys-22.

Belongs to the LolB family. In terms of assembly, monomer.

It localises to the cell outer membrane. Its function is as follows. Plays a critical role in the incorporation of lipoproteins in the outer membrane after they are released by the LolA protein. The protein is Outer-membrane lipoprotein LolB of Escherichia fergusonii (strain ATCC 35469 / DSM 13698 / CCUG 18766 / IAM 14443 / JCM 21226 / LMG 7866 / NBRC 102419 / NCTC 12128 / CDC 0568-73).